Here is a 1063-residue protein sequence, read N- to C-terminus: Valine--tRNA ligase, mitochondrial (1063 aa).

The N-terminal 26 residues, 1-26 (MPHLPLASFRPPFWGLRHSRGLPRFH), are a transit peptide targeting the mitochondrion. A disordered region spans residues 25 to 53 (FHSVSTQSEPHGSPISRRNREAKQKRLRE). Positions 42 to 53 (RNREAKQKRLRE) are enriched in basic and acidic residues. The 'HIGH' region signature appears at 146 to 156 (PNVTGSLHIGH). Residues 658–662 (KMSKS) carry the 'KMSKS' region motif. Residue K661 coordinates ATP.

Belongs to the class-I aminoacyl-tRNA synthetase family.

The protein resides in the mitochondrion. It carries out the reaction tRNA(Val) + L-valine + ATP = L-valyl-tRNA(Val) + AMP + diphosphate. Functionally, catalyzes the attachment of valine to tRNA(Val) in a two-step reaction: valine is first activated by ATP to form Val-AMP and then transferred to the acceptor end of tRNA(Val). The chain is Valine--tRNA ligase, mitochondrial (VARS2) from Homo sapiens (Human).